Reading from the N-terminus, the 80-residue chain is Nuclear protein 1 (80 aa).

The disordered stretch occupies residues 40–80 (GGRKGRTKREAAANTNRPSPGGHERKLLTKFQNSERKKAWR). The span at 61 to 80 (GHERKLLTKFQNSERKKAWR) shows a compositional bias: basic and acidic residues. The short motif at 64–80 (RKLLTKFQNSERKKAWR) is the Nuclear localization signal element.

It belongs to the NUPR family. As to quaternary structure, monomer. Directly interacts with MSL1 and binds MORF4L1, two components of histone acetyltransferase complex; the interaction with MORF4L1 may be mediated by MSL1. Interacts with EP300; this interaction enhances the effect of EP300 on PAX2 transcription factor activity. Interacts with PAXIP1; this interaction prevents PAXIP1 inhibition of PAX2 transcription factor activity. Interacts with COPS5; this interaction allows COPS5-dependent CDKN1B nuclear to cytoplasm translocation. Interacts with RNF2. Interacts with FOXO3; this interaction represses FOXO3 transactivation. Interacts with PTMA; regulates apoptotic process. Interacts with MYOD1, EP300 and DDX5; this interaction coordinates the association of anti-proliferative and pro-myogenic proteins at the myogenin promoter. Interacts with TP53; interaction is stress-dependent. Forms a complex with EP300 and TP53; this complex binds CDKN1A promoter leading to transcriptional induction of CDKN1A. In terms of processing, phosphorylated. Phosphorylation promotes DNA-binding activity. Post-translationally, acetylated. As to expression, strongly activated in pancreatic acinar cells during the acute phase of pancreatitis, in developing pancreas and during pancreatic regeneration.

The protein localises to the nucleus. It is found in the cytoplasm. Its subcellular location is the perinuclear region. Transcription regulator that converts stress signals into a program of gene expression that empowers cells with resistance to the stress induced by a change in their microenvironment. Thereby participates in the regulation of many processes namely cell-cycle, apoptosis, autophagy and DNA repair responses. Controls cell cycle progression and protects cells from genotoxic stress induced by doxorubicin through the complex formation with TP53 and EP300 that binds CDKN1A promoter leading to transcriptional induction of CDKN1A. Protects pancreatic cancer cells from stress-induced cell death by binding the RELB promoter and activating its transcription, leading to IER3 transactivation. Negatively regulates apoptosis through interaction with PTMA. Inhibits autophagy-induced apoptosis in cardiac cells through FOXO3 interaction, inducing cytoplasmic translocation of FOXO3 thereby preventing the FOXO3 association with the pro-autophagic BNIP3 promoter. Inhibits cell growth and facilitates programmed cell death by apoptosis after adriamycin-induced DNA damage through transactivation of TP53. Regulates methamphetamine-induced apoptosis and autophagy through DDIT3-mediated endoplasmic reticulum stress pathway. Participates in DNA repair following gamma-irradiation by facilitating DNA access of the transcription machinery through interaction with MSL1 leading to inhibition of histone H4' Lys-16' acetylation (H4K16ac). Coactivator of PAX2 transcription factor activity, both by recruiting the EP300 cofactor to increase PAX2 transcription factor activity and by binding PAXIP1 to suppress PAXIP1-induced inhibition on PAX2. Positively regulates cell cycle progression through interaction with COPS5 inducing cytoplasmic translocation of CDKN1B leading to the CDKN1B degradation. Coordinates, through its interaction with EP300, the assiociation of MYOD1, EP300 and DDX5 to the MYOG promoter, leading to inhibition of cell-cycle progression and myogenic differentiation promotion. Negatively regulates beta cell proliferation via inhibition of cell-cycle regulatory genes expression through the suppression of their promoter activities. Also required for LHB expression and ovarian maturation. Exacerbates CNS inflammation and demyelination upon cuprizone treatment. The polypeptide is Nuclear protein 1 (Rattus norvegicus (Rat)).